The chain runs to 304 residues: Methionyl-tRNA formyltransferase (304 aa).

107–110 (SLLP) is a (6S)-5,6,7,8-tetrahydrofolate binding site.

The protein belongs to the Fmt family.

It carries out the reaction L-methionyl-tRNA(fMet) + (6R)-10-formyltetrahydrofolate = N-formyl-L-methionyl-tRNA(fMet) + (6S)-5,6,7,8-tetrahydrofolate + H(+). Its function is as follows. Attaches a formyl group to the free amino group of methionyl-tRNA(fMet). The formyl group appears to play a dual role in the initiator identity of N-formylmethionyl-tRNA by promoting its recognition by IF2 and preventing the misappropriation of this tRNA by the elongation apparatus. This is Methionyl-tRNA formyltransferase from Coprothermobacter proteolyticus (strain ATCC 35245 / DSM 5265 / OCM 4 / BT).